We begin with the raw amino-acid sequence, 387 residues long: Alpha-sarcoglycan (387 aa).

The signal sequence occupies residues 1 to 23 (MAATLTWILLFVGLLAGLRDTKA). At 24 to 290 (QQTTLYPLVG…ATGRDFLADA (267 aa)) the chain is on the extracellular side. 2 N-linked (GlcNAc...) asparagine glycosylation sites follow: asparagine 174 and asparagine 246. Residues 291–311 (LVTLLVPLLVALLLTLLLAYI) traverse the membrane as a helical segment. At 312–387 (MCCRREGQLK…AQVPLILDQH (76 aa)) the chain is on the cytoplasmic side. Residue serine 377 is modified to Phosphoserine.

It belongs to the sarcoglycan alpha/epsilon family. As to quaternary structure, interacts with the syntrophin SNTA1. Cross-link to form 2 major subcomplexes: one consisting of SGCB, SGCD and SGCG and the other consisting of SGCB and SGCD. The association between SGCB and SGCG is particularly strong while SGCA is loosely associated with the other sarcoglycans. In terms of tissue distribution, strongly expressed in skeletal and heart muscle.

It localises to the cell membrane. Its subcellular location is the sarcolemma. The protein resides in the cytoplasm. It is found in the cytoskeleton. Functionally, component of the sarcoglycan complex, a subcomplex of the dystrophin-glycoprotein complex which forms a link between the F-actin cytoskeleton and the extracellular matrix. The protein is Alpha-sarcoglycan (SGCA) of Mesocricetus auratus (Golden hamster).